The following is a 430-amino-acid chain: Adenylosuccinate synthetase (430 aa).

GTP-binding positions include 12–18 and 40–42; these read GDEGKGK and GHT. The active-site Proton acceptor is the aspartate 13. Positions 13 and 40 each coordinate Mg(2+). Residues 13-16, 38-41, threonine 128, arginine 142, glutamine 223, threonine 238, and arginine 302 contribute to the IMP site; these read DEGK and NAGH. The active-site Proton donor is histidine 41. Substrate is bound at residue 298–304; that stretch reads TTTGRPR. GTP contacts are provided by residues arginine 304, 330–332, and 412–414; these read SID and SVG.

Belongs to the adenylosuccinate synthetase family. As to quaternary structure, homodimer. The cofactor is Mg(2+).

The protein localises to the cytoplasm. It carries out the reaction IMP + L-aspartate + GTP = N(6)-(1,2-dicarboxyethyl)-AMP + GDP + phosphate + 2 H(+). The protein operates within purine metabolism; AMP biosynthesis via de novo pathway; AMP from IMP: step 1/2. Plays an important role in the de novo pathway of purine nucleotide biosynthesis. Catalyzes the first committed step in the biosynthesis of AMP from IMP. The chain is Adenylosuccinate synthetase from Streptococcus pyogenes serotype M5 (strain Manfredo).